A 239-amino-acid polypeptide reads, in one-letter code: Proteasome subunit beta type-6 (239 aa).

Position 2 is an N-acetylalanine (Ala-2). A propeptide spans 2-34 (AATLLAARGAGPAPAWGPEAFTPDWESREVSTG) (removed in mature form). Catalysis depends on Thr-35, which acts as the Nucleophile. Phosphothreonine is present on Thr-69.

It belongs to the peptidase T1B family. In terms of assembly, the 26S proteasome consists of a 20S proteasome core and two 19S regulatory subunits. The 20S proteasome core is a barrel-shaped complex made of 28 subunits that are arranged in four stacked rings. The two outer rings are each formed by seven alpha subunits, and the two inner rings are formed by seven beta subunits. The proteolytic activity is exerted by three beta-subunits PSMB5, PSMB6 and PSMB7. (Microbial infection) Interacts with HIV-1 protein Tat.

It is found in the cytoplasm. Its subcellular location is the nucleus. The enzyme catalyses Cleavage of peptide bonds with very broad specificity.. In terms of biological role, component of the 20S core proteasome complex involved in the proteolytic degradation of most intracellular proteins. This complex plays numerous essential roles within the cell by associating with different regulatory particles. Associated with two 19S regulatory particles, forms the 26S proteasome and thus participates in the ATP-dependent degradation of ubiquitinated proteins. The 26S proteasome plays a key role in the maintenance of protein homeostasis by removing misfolded or damaged proteins that could impair cellular functions, and by removing proteins whose functions are no longer required. Associated with the PA200 or PA28, the 20S proteasome mediates ubiquitin-independent protein degradation. This type of proteolysis is required in several pathways including spermatogenesis (20S-PA200 complex) or generation of a subset of MHC class I-presented antigenic peptides (20S-PA28 complex). Within the 20S core complex, PSMB6 displays a peptidylglutamyl-hydrolizing activity also termed postacidic or caspase-like activity, meaning that the peptides bond hydrolysis occurs directly after acidic residues. The protein is Proteasome subunit beta type-6 of Homo sapiens (Human).